The following is a 241-amino-acid chain: Uridylate kinase (241 aa).

Residue 12-15 (KISG) participates in ATP binding. The segment at 20–25 (GDKGNG) is involved in allosteric activation by GTP. Gly-54 serves as a coordination point for UMP. Residues Gly-55 and Arg-59 each coordinate ATP. UMP is bound by residues Asp-74 and 135–142 (TGNPYFST). 3 residues coordinate ATP: Asn-163, Tyr-169, and Asp-172.

This sequence belongs to the UMP kinase family. As to quaternary structure, homohexamer.

It is found in the cytoplasm. The catalysed reaction is UMP + ATP = UDP + ADP. It functions in the pathway pyrimidine metabolism; CTP biosynthesis via de novo pathway; UDP from UMP (UMPK route): step 1/1. With respect to regulation, allosterically activated by GTP. Inhibited by UTP. Its function is as follows. Catalyzes the reversible phosphorylation of UMP to UDP. The sequence is that of Uridylate kinase from Lactobacillus helveticus (strain DPC 4571).